The sequence spans 614 residues: Aspartate--tRNA ligase (614 aa).

Glutamate 174 lines the L-aspartate pocket. The segment at 198–201 is aspartate; sequence QLFK. Arginine 220 serves as a coordination point for L-aspartate. ATP is bound by residues 220-222 and glutamine 229; that span reads RDE. Residue histidine 448 participates in L-aspartate binding. Position 482 (glutamate 482) interacts with ATP. Arginine 489 is an L-aspartate binding site. 534–537 is a binding site for ATP; it reads GLDR. A disordered region spans residues 587 to 614; that stretch reads YEDSVKETEQRLEKEAQEDADKNSTWDE.

The protein belongs to the class-II aminoacyl-tRNA synthetase family. Type 1 subfamily. Homodimer.

The protein resides in the cytoplasm. The enzyme catalyses tRNA(Asp) + L-aspartate + ATP = L-aspartyl-tRNA(Asp) + AMP + diphosphate. Catalyzes the attachment of L-aspartate to tRNA(Asp) in a two-step reaction: L-aspartate is first activated by ATP to form Asp-AMP and then transferred to the acceptor end of tRNA(Asp). The sequence is that of Aspartate--tRNA ligase from Lactobacillus johnsonii (strain CNCM I-12250 / La1 / NCC 533).